A 198-amino-acid polypeptide reads, in one-letter code: Riboflavin synthase (198 aa).

Lumazine-binding repeat units lie at residues 1 to 95 (MFSG…IGGH) and 96 to 188 (FVSG…VDTV). 2,4-dihydroxypteridine contacts are provided by residues 4–6 (GII), 46–48 (CLT), 60–65 (DVTEET), 99–101 (GHV), lysine 130, 139–141 (SLT), and 153–158 (SVIPET).

In terms of assembly, homotrimer.

It carries out the reaction 2 6,7-dimethyl-8-(1-D-ribityl)lumazine + H(+) = 5-amino-6-(D-ribitylamino)uracil + riboflavin. Its pathway is cofactor biosynthesis; riboflavin biosynthesis; riboflavin from 2-hydroxy-3-oxobutyl phosphate and 5-amino-6-(D-ribitylamino)uracil: step 2/2. Its function is as follows. Catalyzes the dismutation of two molecules of 6,7-dimethyl-8-ribityllumazine, resulting in the formation of riboflavin and 5-amino-6-(D-ribitylamino)uracil. The chain is Riboflavin synthase (ribE) from Chlamydia muridarum (strain MoPn / Nigg).